Here is a 66-residue protein sequence, read N- to C-terminus: LYR motif-containing protein PHYPADRAFT_186863 (66 aa).

Belongs to the complex I LYR family. LYRM9 subfamily.

This is LYR motif-containing protein PHYPADRAFT_186863 from Physcomitrium patens (Spreading-leaved earth moss).